The primary structure comprises 140 residues: Phosphopantetheine adenylyltransferase (140 aa).

A substrate-binding site is contributed by S9. ATP is bound by residues 9 to 10 and H17; that span reads SF. Substrate contacts are provided by K41, T74, and R88. ATP-binding positions include 89–91, E99, and 124–130; these read GLR and KRSLSST.

This sequence belongs to the bacterial CoaD family. As to quaternary structure, homohexamer. Mg(2+) serves as cofactor.

It localises to the cytoplasm. It catalyses the reaction (R)-4'-phosphopantetheine + ATP + H(+) = 3'-dephospho-CoA + diphosphate. It functions in the pathway cofactor biosynthesis; coenzyme A biosynthesis; CoA from (R)-pantothenate: step 4/5. Functionally, reversibly transfers an adenylyl group from ATP to 4'-phosphopantetheine, yielding dephospho-CoA (dPCoA) and pyrophosphate. This Mycoplasma capricolum subsp. capricolum (strain California kid / ATCC 27343 / NCTC 10154) protein is Phosphopantetheine adenylyltransferase.